The following is a 276-amino-acid chain: NADPH-dependent 7-cyano-7-deazaguanine reductase (276 aa).

Residue 80-82 (IES) participates in substrate binding. 82-83 (SK) is an NADPH binding site. The active-site Thioimide intermediate is the Cys178. The active-site Proton donor is the Asp185. 217–218 (HE) serves as a coordination point for substrate. 246-247 (RG) provides a ligand contact to NADPH.

Belongs to the GTP cyclohydrolase I family. QueF type 2 subfamily. As to quaternary structure, homodimer.

The protein localises to the cytoplasm. It carries out the reaction 7-aminomethyl-7-carbaguanine + 2 NADP(+) = 7-cyano-7-deazaguanine + 2 NADPH + 3 H(+). The protein operates within tRNA modification; tRNA-queuosine biosynthesis. In terms of biological role, catalyzes the NADPH-dependent reduction of 7-cyano-7-deazaguanine (preQ0) to 7-aminomethyl-7-deazaguanine (preQ1). The protein is NADPH-dependent 7-cyano-7-deazaguanine reductase of Teredinibacter turnerae (strain ATCC 39867 / T7901).